We begin with the raw amino-acid sequence, 280 residues long: Cell envelope integrity protein EipB (280 aa).

Positions 1 to 24 (MRFVRIAAAASGATVFMWAGFAGA) are cleaved as a signal peptide. A disulfide bond links cysteine 69 and cysteine 278.

Monomer.

The protein resides in the periplasm. Functions in the periplasm to maintain cell envelope integrity. This Brucella abortus (strain 2308) protein is Cell envelope integrity protein EipB.